The following is a 727-amino-acid chain: Beta-galactosidase 2 (727 aa).

The signal sequence occupies residues 1 to 27 (MSMHFRNKAWIILAILCFSSLIHSTEA). Glutamate 185 functions as the Proton donor in the catalytic mechanism. The active-site Nucleophile is glutamate 254. Asparagine 255 carries an N-linked (GlcNAc...) asparagine glycan.

The protein belongs to the glycosyl hydrolase 35 family. As to expression, ubiquitous, with higher expression levels in roots and siliques.

The protein localises to the secreted. The protein resides in the extracellular space. Its subcellular location is the apoplast. The catalysed reaction is Hydrolysis of terminal non-reducing beta-D-galactose residues in beta-D-galactosides.. This is Beta-galactosidase 2 (BGAL2) from Arabidopsis thaliana (Mouse-ear cress).